The chain runs to 181 residues: MFKATTILAYKGKNGSIIGGDGQVTFGNTVLKGTATKIRKIGKDGKVLAGFAGSTTDAFNLFDMFEKCLESAKNDLLKAAVDFSKEWRKDKYLRKLEAMMLVLDREHIFLLSGVGDVVEPDDGKIAAIGSGGNYALSAARALDKFGNLNEEELVKESLKIASEICIYTNNHIKTYAIWDNK.

T5 is an active-site residue. Positions 162, 165, and 168 each coordinate Na(+).

It belongs to the peptidase T1B family. HslV subfamily. A double ring-shaped homohexamer of HslV is capped on each side by a ring-shaped HslU homohexamer. The assembly of the HslU/HslV complex is dependent on binding of ATP.

The protein localises to the cytoplasm. It catalyses the reaction ATP-dependent cleavage of peptide bonds with broad specificity.. Allosterically activated by HslU binding. Protease subunit of a proteasome-like degradation complex believed to be a general protein degrading machinery. The sequence is that of ATP-dependent protease subunit HslV from Campylobacter hominis (strain ATCC BAA-381 / DSM 21671 / CCUG 45161 / LMG 19568 / NCTC 13146 / CH001A).